Reading from the N-terminus, the 521-residue chain is Protein YjiT (521 aa).

In Escherichia coli (strain K12), this protein is Protein YjiT (yjiT).